The primary structure comprises 804 residues: Protein SEY1 homolog 1 (804 aa).

Over 1–638 (MEQIITGEGQ…SVLASQNNEH (638 aa)) the chain is Cytoplasmic. The GB1/RHD3-type G domain maps to 28–245 (GTDYHMVSII…EENYLFKEKS (218 aa)). 38-45 (GCQSSGKS) lines the GTP pocket. Residues 639–659 (IPPWAWFLFLFSCSDYILWWL) traverse the membrane as a helical segment. At 660–662 (SNP) the chain is on the lumenal side. Residues 663–683 (LLFSLTVLFGGTYLVLNQLGL) traverse the membrane as a helical segment. Over 684-804 (WDTAVQKLLD…RKRVRVGTLV (121 aa)) the chain is Cytoplasmic. The segment at 706–804 (PDENNETETN…RKRVRVGTLV (99 aa)) is disordered. The segment covering 751 to 791 (QGLTKTESNVTFANVSNANDEQSLTKNNTEDSLNTGSSSSG) has biased composition (polar residues). A compositionally biased stretch (basic residues) spans 792–804 (QRHRKRVRVGTLV).

This sequence belongs to the TRAFAC class dynamin-like GTPase superfamily. GB1/RHD3 GTPase family. RHD3 subfamily.

It localises to the endoplasmic reticulum membrane. Probable GTP-binding protein that may be involved in cell development. The polypeptide is Protein SEY1 homolog 1 (Trichomonas vaginalis (strain ATCC PRA-98 / G3)).